The chain runs to 220 residues: Flavin-dependent thymidylate synthase (220 aa).

One can recognise a ThyX domain in the interval 1 to 208; that stretch reads MKIDILDKGF…PWTFEAFLKY (208 aa). FAD is bound by residues T55, 78–80, and E86; that span reads RHR. Residues 75 to 78, 86 to 90, and R147 contribute to the dUMP site; these read QWFR and ELSGR. A ThyX motif motif is present at residues 78 to 88; sequence RHRIASYNELS. Residues 163–165 and N169 contribute to the FAD site; that span reads NAR. R174 lines the dUMP pocket. The active-site Involved in ionization of N3 of dUMP, leading to its activation is R174.

This sequence belongs to the thymidylate synthase ThyX family. As to quaternary structure, homotetramer. It depends on FAD as a cofactor.

The catalysed reaction is dUMP + (6R)-5,10-methylene-5,6,7,8-tetrahydrofolate + NADPH + H(+) = dTMP + (6S)-5,6,7,8-tetrahydrofolate + NADP(+). It participates in pyrimidine metabolism; dTTP biosynthesis. Functionally, catalyzes the reductive methylation of 2'-deoxyuridine-5'-monophosphate (dUMP) to 2'-deoxythymidine-5'-monophosphate (dTMP) while utilizing 5,10-methylenetetrahydrofolate (mTHF) as the methyl donor, and NADPH and FADH(2) as the reductant. The polypeptide is Flavin-dependent thymidylate synthase (Thermotoga sp. (strain RQ2)).